A 650-amino-acid polypeptide reads, in one-letter code: MSSQSLYKVSGNIAANALVNNDQYKTMYQESIVNPEGFWREHGKRIDWIKPYTKIKKTTFDDHNLSINWFYDGTLNASANCLDRHLAAHSDRVAIIWEGDNANEQRKITYGELHTQVCKFANALRSQGVRRGDIVTIYMPMVPEAAVAMLACARIGAVHSVVFGGFSPDSIASRVIDGKSKIVITSDEGMRGGRAIPLKRNIDDALKHPDVTSVEKVIVLKRTGGKIDWVEGRDVWWHSLVETASEHCAVEEMGAEDPLFLLYTSGSTGNPKGVLHTTGGYMVYASMTHEYVFDYKPGEIYWCTADVGWITGHSYMVYGPLANGATVLIHEGVPNHPSPARLGEMIDRHKVNILYTAPTLIRALMAEGKQHFDKYNGSSLRIMGSVGEPINPEAWRWYHEVIGHEHCPIVDTWWQTETGGILITPLPGATDTKPGSATRPFFGVQPALVDNMGNILEGATEGNLVLLDSWPGQMRTVYGDHERFVLTYFKTFRGMYFTGDGARRDEDGYYWITGRVDDVINVSGHRLGTAEVESALVSHELVAEAAVVGYPHDIKGQGIYAYVTLTRGTEESEELRQELRQWVRKEIGALATPDLIQWATGLPKTRSGKIMRRFLRKIAANEVTNLGDASTLADPAVIETLIETRLNRNE.

CoA contacts are provided by residues 191-194 (RGGR), threonine 311, and asparagine 335. ATP contacts are provided by residues 387-389 (GEP), 411-416 (DTWWQT), aspartate 500, and arginine 515. Serine 523 provides a ligand contact to CoA. Arginine 526 contacts ATP. Residues valine 537, histidine 539, and valine 542 each coordinate Mg(2+). A CoA-binding site is contributed by arginine 584. Residue lysine 609 is modified to N6-acetyllysine.

This sequence belongs to the ATP-dependent AMP-binding enzyme family. Mg(2+) serves as cofactor. Post-translationally, acetylated. Deacetylation by the SIR2-homolog deacetylase activates the enzyme.

It catalyses the reaction acetate + ATP + CoA = acetyl-CoA + AMP + diphosphate. Its function is as follows. Catalyzes the conversion of acetate into acetyl-CoA (AcCoA), an essential intermediate at the junction of anabolic and catabolic pathways. AcsA undergoes a two-step reaction. In the first half reaction, AcsA combines acetate with ATP to form acetyl-adenylate (AcAMP) intermediate. In the second half reaction, it can then transfer the acetyl group from AcAMP to the sulfhydryl group of CoA, forming the product AcCoA. This is Acetyl-coenzyme A synthetase from Shewanella oneidensis (strain ATCC 700550 / JCM 31522 / CIP 106686 / LMG 19005 / NCIMB 14063 / MR-1).